A 592-amino-acid chain; its full sequence is Probable tubulin polyglutamylase TTLL2 (592 aa).

2 disordered regions span residues 1-23 (MRGRDLCSSTQSQALGSLRTTTP) and 51-77 (GVSIPPRRGRPTPTLEKKKKPHLMAED). Residues 7–23 (CSSTQSQALGSLRTTTP) are compositionally biased toward polar residues. One can recognise a TTL domain in the interval 84–427 (LKPLVFRVDE…NGLRNEGREA (344 aa)). Residues K212, 218–219 (RG), 240–243 (QKYI), and 253–255 (KCD) contribute to the ATP site. R218 provides a ligand contact to a protein. R279 serves as a coordination point for L-glutamate. 298-299 (TN) is a binding site for ATP. L-glutamate contacts are provided by S301 and K321. Residues D373, E386, and N388 each coordinate Mg(2+). L-glutamate is bound at residue K404.

It belongs to the tubulin--tyrosine ligase family. Mg(2+) is required as a cofactor. In terms of tissue distribution, testis.

Functionally, probable tubulin polyglutamylase that generates side chains of glutamate on the gamma-carboxyl group of specific glutamate residues within the C-terminal tail of target proteins. Similar to TTLL1, may acquire enzymatic activity only in complex with other proteins as it is most likely lacking domains important for autonomous activity. Probably involved in the side-chain initiation step of the polyglutamylation reaction rather than the elongation step. In Homo sapiens (Human), this protein is Probable tubulin polyglutamylase TTLL2.